A 344-amino-acid chain; its full sequence is tRNA N6-adenosine threonylcarbamoyltransferase (344 aa).

Residues H110 and H114 each coordinate Fe cation. Residues 133 to 137, D166, G179, and N278 contribute to the substrate site; that span reads VVSGA. D303 is a binding site for Fe cation.

This sequence belongs to the KAE1 / TsaD family. Requires Fe(2+) as cofactor.

It localises to the cytoplasm. It carries out the reaction L-threonylcarbamoyladenylate + adenosine(37) in tRNA = N(6)-L-threonylcarbamoyladenosine(37) in tRNA + AMP + H(+). Required for the formation of a threonylcarbamoyl group on adenosine at position 37 (t(6)A37) in tRNAs that read codons beginning with adenine. Is involved in the transfer of the threonylcarbamoyl moiety of threonylcarbamoyl-AMP (TC-AMP) to the N6 group of A37, together with TsaE and TsaB. TsaD likely plays a direct catalytic role in this reaction. The polypeptide is tRNA N6-adenosine threonylcarbamoyltransferase (Chlamydia abortus (strain DSM 27085 / S26/3) (Chlamydophila abortus)).